Reading from the N-terminus, the 184-residue chain is Probable cobalt-precorrin-6B C(15)-methyltransferase (decarboxylating) (184 aa).

S-adenosyl-L-methionine is bound by residues Thr-12, 36–40 (GCGTG), Asp-59, and Ala-87.

It belongs to the methyltransferase superfamily. Archaeal-type CbiT family.

The catalysed reaction is Co-precorrin-6B + S-adenosyl-L-methionine = Co-precorrin-7 + S-adenosyl-L-homocysteine + CO2. It participates in cofactor biosynthesis; adenosylcobalamin biosynthesis; cob(II)yrinate a,c-diamide from sirohydrochlorin (anaerobic route): step 8/10. Functionally, catalyzes the methylation of C-15 in cobalt-precorrin-6B followed by the decarboxylation of C-12 to form cobalt-precorrin-7. This chain is Probable cobalt-precorrin-6B C(15)-methyltransferase (decarboxylating), found in Methanosarcina acetivorans (strain ATCC 35395 / DSM 2834 / JCM 12185 / C2A).